Consider the following 298-residue polypeptide: tRNA dimethylallyltransferase 2 (298 aa).

10 to 17 (GPTASGKT) is an ATP binding site. 12–17 (TASGKT) is a substrate binding site. The interval 35-38 (DSRQ) is interaction with substrate tRNA.

This sequence belongs to the IPP transferase family. As to quaternary structure, monomer. The cofactor is Mg(2+).

The catalysed reaction is adenosine(37) in tRNA + dimethylallyl diphosphate = N(6)-dimethylallyladenosine(37) in tRNA + diphosphate. Functionally, catalyzes the transfer of a dimethylallyl group onto the adenine at position 37 in tRNAs that read codons beginning with uridine, leading to the formation of N6-(dimethylallyl)adenosine (i(6)A). This chain is tRNA dimethylallyltransferase 2, found in Syntrophotalea carbinolica (strain DSM 2380 / NBRC 103641 / GraBd1) (Pelobacter carbinolicus).